Consider the following 249-residue polypeptide: 5'-nucleotidase SurE 2 (249 aa).

The a divalent metal cation site is built by D8, D9, S40, and N90.

Belongs to the SurE nucleotidase family. A divalent metal cation is required as a cofactor.

The protein resides in the cytoplasm. It catalyses the reaction a ribonucleoside 5'-phosphate + H2O = a ribonucleoside + phosphate. Nucleotidase that shows phosphatase activity on nucleoside 5'-monophosphates. The protein is 5'-nucleotidase SurE 2 of Pyrobaculum aerophilum (strain ATCC 51768 / DSM 7523 / JCM 9630 / CIP 104966 / NBRC 100827 / IM2).